Here is a 525-residue protein sequence, read N- to C-terminus: GMP synthase [glutamine-hydrolyzing] (525 aa).

In terms of domain architecture, Glutamine amidotransferase type-1 spans 8–206 (PLLILDFGSQ…VVDICKAPTE (199 aa)). The active-site Nucleophile is the Cys-85. Residues His-180 and Glu-182 contribute to the active site. The GMPS ATP-PPase domain maps to 207–400 (WTPEHIIDEA…LGLPHDMVYR (194 aa)). 234–240 (SGGVDSS) contacts ATP.

In terms of assembly, homodimer.

The enzyme catalyses XMP + L-glutamine + ATP + H2O = GMP + L-glutamate + AMP + diphosphate + 2 H(+). Its pathway is purine metabolism; GMP biosynthesis; GMP from XMP (L-Gln route): step 1/1. In terms of biological role, catalyzes the synthesis of GMP from XMP. The sequence is that of GMP synthase [glutamine-hydrolyzing] from Legionella pneumophila (strain Corby).